Consider the following 424-residue polypeptide: 3-phosphoshikimate 1-carboxyvinyltransferase (424 aa).

Positions 21, 22, and 26 each coordinate 3-phosphoshikimate. Phosphoenolpyruvate is bound at residue Lys-21. The phosphoenolpyruvate site is built by Gly-91 and Arg-119. The 3-phosphoshikimate site is built by Ser-164, Gln-166, Asp-310, and Lys-337. Gln-166 is a binding site for phosphoenolpyruvate. Asp-310 acts as the Proton acceptor in catalysis. Phosphoenolpyruvate contacts are provided by Arg-341 and Arg-382.

This sequence belongs to the EPSP synthase family. Monomer.

It localises to the cytoplasm. It carries out the reaction 3-phosphoshikimate + phosphoenolpyruvate = 5-O-(1-carboxyvinyl)-3-phosphoshikimate + phosphate. The protein operates within metabolic intermediate biosynthesis; chorismate biosynthesis; chorismate from D-erythrose 4-phosphate and phosphoenolpyruvate: step 6/7. Functionally, catalyzes the transfer of the enolpyruvyl moiety of phosphoenolpyruvate (PEP) to the 5-hydroxyl of shikimate-3-phosphate (S3P) to produce enolpyruvyl shikimate-3-phosphate and inorganic phosphate. This is 3-phosphoshikimate 1-carboxyvinyltransferase from Campylobacter hominis (strain ATCC BAA-381 / DSM 21671 / CCUG 45161 / LMG 19568 / NCTC 13146 / CH001A).